The sequence spans 166 residues: NADPH-dependent 7-cyano-7-deazaguanine reductase (166 aa).

The active-site Thioimide intermediate is the Cys57. The active-site Proton donor is the Asp64. Substrate-binding positions include 79–81 (VES) and 98–99 (HE).

Belongs to the GTP cyclohydrolase I family. QueF type 1 subfamily.

It localises to the cytoplasm. The enzyme catalyses 7-aminomethyl-7-carbaguanine + 2 NADP(+) = 7-cyano-7-deazaguanine + 2 NADPH + 3 H(+). It participates in tRNA modification; tRNA-queuosine biosynthesis. Catalyzes the NADPH-dependent reduction of 7-cyano-7-deazaguanine (preQ0) to 7-aminomethyl-7-deazaguanine (preQ1). This is NADPH-dependent 7-cyano-7-deazaguanine reductase from Staphylococcus aureus (strain MRSA252).